The sequence spans 348 residues: Trans-L-3-hydroxyproline dehydratase (348 aa).

Cys-101 functions as the Proton acceptor in the catalytic mechanism. Residues 102–103 (GH), Asp-263, and 268–269 (GS) each bind substrate.

This sequence belongs to the proline racemase family. Homodimer.

The catalysed reaction is trans-3-hydroxy-L-proline = 1-pyrroline-2-carboxylate + H2O. In terms of biological role, catalyzes the dehydration of trans-3-hydroxy-L-proline to delta-1-pyrroline-2-carboxylate (Pyr2C). In Xenopus tropicalis (Western clawed frog), this protein is Trans-L-3-hydroxyproline dehydratase (l3hypdh).